Reading from the N-terminus, the 167-residue chain is Ribosome maturation factor RimM (167 aa).

In terms of domain architecture, PRC barrel spans 92–166 (DGVYYYRELL…EVRVELMEGL (75 aa)).

This sequence belongs to the RimM family. In terms of assembly, binds ribosomal protein uS19.

It is found in the cytoplasm. Functionally, an accessory protein needed during the final step in the assembly of 30S ribosomal subunit, possibly for assembly of the head region. Essential for efficient processing of 16S rRNA. May be needed both before and after RbfA during the maturation of 16S rRNA. It has affinity for free ribosomal 30S subunits but not for 70S ribosomes. The protein is Ribosome maturation factor RimM of Lactobacillus delbrueckii subsp. bulgaricus (strain ATCC 11842 / DSM 20081 / BCRC 10696 / JCM 1002 / NBRC 13953 / NCIMB 11778 / NCTC 12712 / WDCM 00102 / Lb 14).